A 572-amino-acid polypeptide reads, in one-letter code: Proline--tRNA ligase (572 aa).

It belongs to the class-II aminoacyl-tRNA synthetase family. ProS type 1 subfamily. Homodimer.

It is found in the cytoplasm. The enzyme catalyses tRNA(Pro) + L-proline + ATP = L-prolyl-tRNA(Pro) + AMP + diphosphate. Catalyzes the attachment of proline to tRNA(Pro) in a two-step reaction: proline is first activated by ATP to form Pro-AMP and then transferred to the acceptor end of tRNA(Pro). As ProRS can inadvertently accommodate and process non-cognate amino acids such as alanine and cysteine, to avoid such errors it has two additional distinct editing activities against alanine. One activity is designated as 'pretransfer' editing and involves the tRNA(Pro)-independent hydrolysis of activated Ala-AMP. The other activity is designated 'posttransfer' editing and involves deacylation of mischarged Ala-tRNA(Pro). The misacylated Cys-tRNA(Pro) is not edited by ProRS. The polypeptide is Proline--tRNA ligase (Psychrobacter arcticus (strain DSM 17307 / VKM B-2377 / 273-4)).